The following is a 367-amino-acid chain: DNA polymerase IV (367 aa).

The UmuC domain maps to 14–198; that stretch reads IIHIDMDAFF…LPIAKFHGVG (185 aa). Mg(2+)-binding residues include Asp18 and Asp116. The active site involves Glu117.

Belongs to the DNA polymerase type-Y family. As to quaternary structure, monomer. Mg(2+) is required as a cofactor.

It localises to the cytoplasm. The catalysed reaction is DNA(n) + a 2'-deoxyribonucleoside 5'-triphosphate = DNA(n+1) + diphosphate. In terms of biological role, poorly processive, error-prone DNA polymerase involved in untargeted mutagenesis. Copies undamaged DNA at stalled replication forks, which arise in vivo from mismatched or misaligned primer ends. These misaligned primers can be extended by PolIV. Exhibits no 3'-5' exonuclease (proofreading) activity. May be involved in translesional synthesis, in conjunction with the beta clamp from PolIII. This Streptococcus thermophilus (strain ATCC BAA-491 / LMD-9) protein is DNA polymerase IV.